Consider the following 1183-residue polypeptide: Atrophin-1 (1183 aa).

Disordered regions lie at residues 1-603, 617-760, and 780-855; these read MKTR…ITTS, SPAG…ARFN, and LEGS…HRPP. A Nuclear localization signal motif is present at residues 16 to 32; the sequence is RKKEAPGPREELRSRGR. Residues 17 to 29 show a composition bias toward basic and acidic residues; sequence KKEAPGPREELRS. A Phosphoserine modification is found at S34. Over residues 45–63 the composition is skewed to basic and acidic residues; it reads GKAEKSRQTAKKARVEETS. A phosphoserine mark is found at S77, S79, S100, S102, and S106. Over residues 107-127 the composition is skewed to basic and acidic residues; it reads LDGRSINDDGSSDPRDIDQDN. The span at 128 to 151 shows a compositional bias: polar residues; it reads RSTSPSIYSPGSVENDSDSSSGLS. Composition is skewed to pro residues over residues 157–173 and 207–218; these read PYHP…PPDS and GPPPGAPPPHPQ. Low complexity predominate over residues 261–272; that stretch reads IPISSSGASGAP. Residues 344–373 are compositionally biased toward pro residues; it reads PPGPEKGPTLAPSPHPLPPASSSAPGPPMR. The segment covering 377–400 has biased composition (low complexity); it reads SSCSSSSVAASSSSSAATSQYPAS. The span at 415–436 shows a compositional bias: polar residues; it reads SMSVSNQPPKYTQPSLPSQAVW. Residues 510–560 form an involved in binding BAIAP2 region; that stretch reads HPLESSNSHHAHPYNMSPSLGSLRPYPPGPAHLPPSHGQVSYSQAGPNGPP. Residues 562-584 are compositionally biased toward low complexity; sequence SSSSNSSGSSSQAAYSCSHPSSS. S625 carries the post-translational modification Phosphoserine. K634 carries the N6-acetyllysine modification. At T646 the chain carries Phosphothreonine. Phosphoserine is present on S654. Position 662 is a phosphothreonine (T662). Pro residues-rich tracts occupy residues 701 to 711 and 732 to 745; these read LPPPPAAPTTG and SPVP…PPPK. Residue S732 is modified to Phosphoserine; by MAPK8. S739 and S741 each carry phosphoserine. A compositionally biased stretch (basic and acidic residues) spans 788 to 832; that stretch reads KRADLVEKVRREAEQRAREEKEREREREREKEREREKERELERSV. The required for interaction with FAT1 stretch occupies residues 872–887; the sequence is DTPALRTLSEYARPHV. A Phosphoserine modification is found at S889. A disordered region spans residues 921-940; sequence PAAREREREARERDLRDRLK. Basic and acidic residues predominate over residues 922-940; the sequence is AAREREREARERDLRDRLK. A Nuclear export signal motif is present at residues 1026-1034; the sequence is ALGNDPLAR. At R1108 the chain carries Asymmetric dimethylarginine. K1176 is covalently cross-linked (Glycyl lysine isopeptide (Lys-Gly) (interchain with G-Cter in SUMO2)).

In terms of assembly, interacts with NR2E1; the interaction represses the transcriptional activity of NR2E1. Interact (via its N-terminus) with FAT1 (via a C-terminal domain). Interacts with BAIAP2, WWP1, WWP2, WWP3 and RERE. Interacts (via its N-terminus) with MTG8; the interaction enhances transcriptional repression of MTG8. Interacts with PQBP1. Phosphorylated in vitro by MAPK8/JNK1 on Ser-732. Predominant neuronal expression, Expressed in most brain regions including striatum, hippocampus, cerebral cortex, diencephalon, brain stem and cerebellum. Highest levels in cerebellum. Also highly expressed in kidney and testis, low expression in skeletal muscle and heart.

The protein localises to the nucleus. Its subcellular location is the cytoplasm. It is found in the perinuclear region. It localises to the cell junction. Functionally, transcriptional corepressor. Recruits NR2E1 to repress transcription. Promotes vascular smooth cell (VSMC) migration and orientation. Corepressor of MTG8 transcriptional repression. Has some intrinsic repression activity. This chain is Atrophin-1 (Atn1), found in Rattus norvegicus (Rat).